A 312-amino-acid chain; its full sequence is MKVSIFGAGRVGISIAYSLLHTKIADEMVIVDIDIKRAEGEVLDLYHSTPFLKRCNITAGNPHDILNSDFVIITAGASQSAGESRLSLTKRNVKIIRQIAAQIKKYSPDAIVINVSNPVDVLSYVLWKETKFNWRKVIGTGTILDTARFRALVAKQCGVSPMSVHAYIIGEHGDSELLVWSNATIGGVSIKRFCQFCTNKNCTPLESLFEQTKNAAYEIIEKKGATNLAIGTATAALVESIYRDEKRVWTVSVFQDNLYIGFPAILGKNGVEKLVPVKLNSVEKEAFERSKEVIKKYIKEGEKSEREESSSN.

NAD(+) is bound by residues Val11, Asp32, Arg37, and 76 to 77 (GA). Residues Gln79, Arg85, and 117 to 120 (NPVD) each bind substrate. Residues 115–117 (VSN) and Thr140 each bind NAD(+). Residue 145–148 (DTAR) coordinates substrate. Arg150 and His165 together coordinate beta-D-fructose 1,6-bisphosphate. Residue His172 is the Proton acceptor of the active site. Position 217 is a phosphotyrosine (Tyr217). A substrate-binding site is contributed by Thr226.

Belongs to the LDH/MDH superfamily. LDH family. As to quaternary structure, homotetramer.

It is found in the cytoplasm. It catalyses the reaction (S)-lactate + NAD(+) = pyruvate + NADH + H(+). It functions in the pathway fermentation; pyruvate fermentation to lactate; (S)-lactate from pyruvate: step 1/1. Allosterically activated by fructose 1,6-bisphosphate (FBP). Its function is as follows. Catalyzes the conversion of lactate to pyruvate. The protein is L-lactate dehydrogenase of Pseudothermotoga lettingae (strain ATCC BAA-301 / DSM 14385 / NBRC 107922 / TMO) (Thermotoga lettingae).